The following is a 410-amino-acid chain: DNA replication and repair protein RecF (410 aa).

Position 30-37 (30-37 (GPNGHGKT)) interacts with ATP.

This sequence belongs to the RecF family.

It is found in the cytoplasm. The RecF protein is involved in DNA metabolism; it is required for DNA replication and normal SOS inducibility. RecF binds preferentially to single-stranded, linear DNA. It also seems to bind ATP. This chain is DNA replication and repair protein RecF, found in Rhodococcus opacus (strain B4).